The following is a 331-amino-acid chain: Beta-ketoacyl-[acyl-carrier-protein] synthase III (331 aa).

Catalysis depends on residues cysteine 115 and histidine 255. An ACP-binding region spans residues 256 to 260 (QANFR). The active site involves asparagine 285.

Belongs to the thiolase-like superfamily. FabH family. As to quaternary structure, homodimer.

The protein resides in the cytoplasm. It catalyses the reaction malonyl-[ACP] + acetyl-CoA + H(+) = 3-oxobutanoyl-[ACP] + CO2 + CoA. It participates in lipid metabolism; fatty acid biosynthesis. In terms of biological role, catalyzes the condensation reaction of fatty acid synthesis by the addition to an acyl acceptor of two carbons from malonyl-ACP. Catalyzes the first condensation reaction which initiates fatty acid synthesis and may therefore play a role in governing the total rate of fatty acid production. Possesses both acetoacetyl-ACP synthase and acetyl transacylase activities. Its substrate specificity determines the biosynthesis of branched-chain and/or straight-chain of fatty acids. The protein is Beta-ketoacyl-[acyl-carrier-protein] synthase III of Helicobacter pylori (strain J99 / ATCC 700824) (Campylobacter pylori J99).